The primary structure comprises 535 residues: Glucan 1,6-alpha-glucosidase (535 aa).

Asp-194 functions as the Nucleophile in the catalytic mechanism. Glu-236 acts as the Proton donor in catalysis.

The protein belongs to the glycosyl hydrolase 13 family.

It localises to the cytoplasm. It catalyses the reaction Hydrolysis of (1-&gt;6)-alpha-D-glucosidic linkages in (1-&gt;6)-alpha-D-glucans and derived oligosaccharides.. In terms of biological role, the physiological substrates may be short isomaltosaccharides. This Streptococcus pneumoniae serotype 4 (strain ATCC BAA-334 / TIGR4) protein is Glucan 1,6-alpha-glucosidase (dexB).